The following is a 376-amino-acid chain: DNA repair protein RAD51 homolog 3 (376 aa).

The required for Holliday junction resolution activity stretch occupies residues 1-126 (MRGKTFRFEM…LMKTTEICGA (126 aa)). A Phosphoserine modification is found at serine 20. The interaction with RAD51B, RAD51D and XRCC3 stretch occupies residues 79–136 (SESHKKCTALELLEQEHTQGFIITFCSALDDILGGGVPLMKTTEICGAPGVGKTQLCM). 125 to 132 (GAPGVGKT) provides a ligand contact to ATP. Residues 366–370 (RKRSR) carry the Nuclear localization signal motif.

Belongs to the RecA family. RAD51 subfamily. Part of the RAD51 paralog protein complexes BCDX2 and CX3; the complexes have a ring-like structure arranged into a flat disc around a central channel. The BCDX2 complex consits of RAD51B, RAD51C, RAD51D and XRCC2; the CX3 complex consists of RAD51C and XRCC3. The BCDX2 subcomplex RAD51B:RAD51C interacts with RAD51. Interacts with SWSAP1; involved in homologous recombination repair. Interacts directly with PALB2 which may serve as a scaffold for a HR complex containing PALB2, BRCA2, RAD51C, RAD51 and XRCC3. Interacts with HELQ. Interacts with DNA damage up-regulated protein DDUP. In terms of tissue distribution, expressed in a variety of tissues, with highest expression in testis, heart muscle, spleen and prostate.

The protein localises to the nucleus. It is found in the cytoplasm. The protein resides in the perinuclear region. Its subcellular location is the mitochondrion. In terms of biological role, essential for the homologous recombination (HR) pathway of DNA repair. Involved in the homologous recombination repair (HRR) pathway of double-stranded DNA breaks arising during DNA replication or induced by DNA-damaging agents. Part of the RAD51 paralog protein complexes BCDX2 and CX3 which act at different stages of the BRCA1-BRCA2-dependent HR pathway. Upon DNA damage, BCDX2 seems to act downstream of BRCA2 recruitment and upstream of RAD51 recruitment; CX3 seems to act downstream of RAD51 recruitment; both complexes bind predominantly to the intersection of the four duplex arms of the Holliday junction (HJ) and to junction of replication forks. The BCDX2 complex was originally reported to bind single-stranded DNA, single-stranded gaps in duplex DNA and specifically to nicks in duplex DNA. The BCDX2 subcomplex RAD51B:RAD51C exhibits single-stranded DNA-dependent ATPase activity suggesting an involvement in early stages of the HR pathway. Involved in RAD51 foci formation in response to DNA damage suggesting an involvement in early stages of HR probably in the invasion step. Has an early function in DNA repair in facilitating phosphorylation of the checkpoint kinase CHEK2 and thereby transduction of the damage signal, leading to cell cycle arrest and HR activation. Participates in branch migration and HJ resolution and thus is important for processing HR intermediates late in the DNA repair process; the function may be linked to the CX3 complex. Part of a PALB2-scaffolded HR complex containing BRCA2 and which is thought to play a role in DNA repair by HR. Protects RAD51 from ubiquitin-mediated degradation that is enhanced following DNA damage. Plays a role in regulating mitochondrial DNA copy number under conditions of oxidative stress in the presence of RAD51 and XRCC3. Contributes to DNA cross-link resistance, sister chromatid cohesion and genomic stability. Involved in maintaining centrosome number in mitosis. The chain is DNA repair protein RAD51 homolog 3 (RAD51C) from Homo sapiens (Human).